A 336-amino-acid polypeptide reads, in one-letter code: Probable tRNA pseudouridine synthase B (336 aa).

The active-site Nucleophile is D81. Residues L248–M323 form the PUA domain.

It belongs to the pseudouridine synthase TruB family. Type 2 subfamily.

It catalyses the reaction uridine(55) in tRNA = pseudouridine(55) in tRNA. Its function is as follows. Could be responsible for synthesis of pseudouridine from uracil-55 in the psi GC loop of transfer RNAs. This chain is Probable tRNA pseudouridine synthase B, found in Methanocaldococcus jannaschii (strain ATCC 43067 / DSM 2661 / JAL-1 / JCM 10045 / NBRC 100440) (Methanococcus jannaschii).